Here is a 417-residue protein sequence, read N- to C-terminus: Gelsolin (417 aa).

The stretch at 93–171 (KVPVLESHYG…VVQGKEPAHL (79 aa)) is one Gelsolin-like 4 repeat. Residues Gly-107, Asp-108, Glu-138, Asp-150, Gly-155, Pro-157, Thr-187, Asn-227, Asp-228, Glu-250, Asp-331, Asp-332, and Glu-354 each contribute to the Ca(2+) site. Gelsolin-like repeat units lie at residues 213-261 (RAVE…LKIL) and 316-392 (IEEV…PTFI).

It belongs to the villin/gelsolin family.

The protein resides in the cytoplasm. Its subcellular location is the cytoskeleton. Calcium-regulated, actin-modulating protein that binds to the plus (or barbed) ends of actin monomers or filaments, preventing monomer exchange (end-blocking or capping). It can promote the assembly of monomers into filaments (nucleation) as well as sever filaments already formed. Plays a role in ciliogenesis. In Xenopus laevis (African clawed frog), this protein is Gelsolin (gsn).